The primary structure comprises 682 residues: tRNA(Met) cytidine acetyltransferase TmcA (682 aa).

ATP contacts are provided by residues glutamine 176, glycine 198–methionine 207, and arginine 320. The region spanning glutamine 357–phenylalanine 534 is the N-acetyltransferase domain. Acetyl-CoA-binding positions include valine 462–valine 464 and glutamate 502.

Belongs to the RNA cytidine acetyltransferase family. TmcA subfamily.

The protein resides in the cytoplasm. It catalyses the reaction cytidine(34) in elongator tRNA(Met) + acetyl-CoA + ATP + H2O = N(4)-acetylcytidine(34) in elongator tRNA(Met) + ADP + phosphate + CoA + H(+). In terms of biological role, catalyzes the formation of N(4)-acetylcytidine (ac(4)C) at the wobble position of tRNA(Met), by using acetyl-CoA as an acetyl donor and ATP (or GTP). This Photorhabdus asymbiotica subsp. asymbiotica (strain ATCC 43949 / 3105-77) (Xenorhabdus luminescens (strain 2)) protein is tRNA(Met) cytidine acetyltransferase TmcA.